Consider the following 124-residue polypeptide: Seripauperin-3 (124 aa).

A helical membrane pass occupies residues 7–24; the sequence is IAAGVAAIAAGIAAAPAT.

It belongs to the SRP1/TIP1 family. Seripauperin subfamily.

It localises to the membrane. The protein is Seripauperin-3 (PAU3) of Saccharomyces cerevisiae (strain ATCC 204508 / S288c) (Baker's yeast).